The primary structure comprises 89 residues: MATLYDNEAKIKQAIVLLQKVVNDTSVPRNIRRAASDAIRNLQDPSLSPAVRAANATAILDEISQDPNMPSQTRISIWNVVSILETIRD.

Belongs to the UPF0147 family.

The sequence is that of UPF0147 protein Msed_2034 from Metallosphaera sedula (strain ATCC 51363 / DSM 5348 / JCM 9185 / NBRC 15509 / TH2).